The following is a 69-amino-acid chain: Cytochrome c oxidase subunit 8A, mitochondrial (69 aa).

The transit peptide at 1 to 25 directs the protein to the mitochondrion; it reads MSVLTPLLLRGLTGSARRLPVPRAK. An SIFI-degron motif is present at residues 2-19; that stretch reads SVLTPLLLRGLTGSARRL. At 26–36 the chain is on the mitochondrial matrix side; sequence IHSLPPEEKLG. Residues 37 to 60 form a helical membrane-spanning segment; that stretch reads IMELAVGLTSCFVTFLLPAGWILS. The Mitochondrial intermembrane portion of the chain corresponds to 61-69; the sequence is HLETYRRPE.

Belongs to the cytochrome c oxidase VIII family. As to quaternary structure, component of the cytochrome c oxidase (complex IV, CIV), a multisubunit enzyme composed of 14 subunits. The complex is composed of a catalytic core of 3 subunits MT-CO1, MT-CO2 and MT-CO3, encoded in the mitochondrial DNA, and 11 supernumerary subunits COX4I, COX5A, COX5B, COX6A, COX6B, COX6C, COX7A, COX7B, COX7C, COX8 and NDUFA4, which are encoded in the nuclear genome. The complex exists as a monomer or a dimer and forms supercomplexes (SCs) in the inner mitochondrial membrane with NADH-ubiquinone oxidoreductase (complex I, CI) and ubiquinol-cytochrome c oxidoreductase (cytochrome b-c1 complex, complex III, CIII), resulting in different assemblies (supercomplex SCI(1)III(2)IV(1) and megacomplex MCI(2)III(2)IV(2)). In response to mitochondrial stress, the precursor protein is ubiquitinated by the SIFI complex in the cytoplasm before mitochondrial import, leading to its degradation. Within the SIFI complex, UBR4 initiates ubiquitin chain that are further elongated or branched by KCMF1.

It localises to the mitochondrion inner membrane. Its pathway is energy metabolism; oxidative phosphorylation. Its function is as follows. Component of the cytochrome c oxidase, the last enzyme in the mitochondrial electron transport chain which drives oxidative phosphorylation. The respiratory chain contains 3 multisubunit complexes succinate dehydrogenase (complex II, CII), ubiquinol-cytochrome c oxidoreductase (cytochrome b-c1 complex, complex III, CIII) and cytochrome c oxidase (complex IV, CIV), that cooperate to transfer electrons derived from NADH and succinate to molecular oxygen, creating an electrochemical gradient over the inner membrane that drives transmembrane transport and the ATP synthase. Cytochrome c oxidase is the component of the respiratory chain that catalyzes the reduction of oxygen to water. Electrons originating from reduced cytochrome c in the intermembrane space (IMS) are transferred via the dinuclear copper A center (CU(A)) of subunit 2 and heme A of subunit 1 to the active site in subunit 1, a binuclear center (BNC) formed by heme A3 and copper B (CU(B)). The BNC reduces molecular oxygen to 2 water molecules using 4 electrons from cytochrome c in the IMS and 4 protons from the mitochondrial matrix. The sequence is that of Cytochrome c oxidase subunit 8A, mitochondrial (COX8A) from Hylobates agilis (Agile gibbon).